Consider the following 991-residue polypeptide: Gingipain R1 (991 aa).

The N-terminal stretch at 1-24 (MKNLNKFVSIALCSSLLGGMAFAQ) is a signal peptide. The propeptide occupies 25 to 227 (QTELGRNPNV…RMFMNYEPGR (203 aa)). Asp305, Val327, Asp330, Tyr332, Glu334, Glu388, and His393 together coordinate Ca(2+). The active-site Proton donor is His438. The Nucleophile role is filled by Cys471. Ca(2+) is bound by residues Phe476, Glu485, Asp519, Glu520, Glu523, and His529.

It belongs to the peptidase C25 family.

Its subcellular location is the secreted. It catalyses the reaction Hydrolysis of proteins and small molecule substrates, with a preference for Arg in P1.. With respect to regulation, requires cysteine for activation and Ca(2+) and/or Mg(2+) for stabilization. It is stimulated by glycine-containing dipeptides. It is resistant to inhibition by proteinase inhibitors in human plasma. Its function is as follows. Thiol protease. Acts synergistically with RgpB to catalyze the maturation of fimbrial subunits, such as FimA. Its proteolytic activity is a major factor in both periodontal tissue destruction and in evasion of host defense mechanisms. In Porphyromonas gingivalis (Bacteroides gingivalis), this protein is Gingipain R1 (rgpA).